A 57-amino-acid polypeptide reads, in one-letter code: Large ribosomal subunit protein bL32 (57 aa).

The segment at 1 to 23 (MAVPKKRTSKTRTNRRRAQKKAR) is disordered.

It belongs to the bacterial ribosomal protein bL32 family.

The chain is Large ribosomal subunit protein bL32 from Natranaerobius thermophilus (strain ATCC BAA-1301 / DSM 18059 / JW/NM-WN-LF).